Here is a 244-residue protein sequence, read N- to C-terminus: MAIKGPRKHLKRLAAPANWQLPRKVKAFTVRPSPGPHSMDKSLPLLLVVRDILKYADNAREAKKIIQTGKILIDGLKRKEYKHPAGLMDVLSIPEMDENYLVLFDESGRISLKKTDKTDAKLCKIVNKTVIKGGHIQLNLHDGRNQIVKVSDATKAEEDVYKTGDSVLVSIPEQSIVGHVAFGEGKLAYITGGKHVGEFAKIVEVENRALYSDIVTLENKDGEKFKTVKPYVFIVGQDEPVISM.

In terms of domain architecture, S4 RNA-binding spans 43–106 (LPLLLVVRDI…DENYLVLFDE (64 aa)).

This sequence belongs to the eukaryotic ribosomal protein eS4 family.

This is Small ribosomal subunit protein eS4 from Methanococcus maripaludis (strain C6 / ATCC BAA-1332).